Here is a 189-residue protein sequence, read N- to C-terminus: Interferon alpha-1 (189 aa).

Positions 1–23 are cleaved as a signal peptide; that stretch reads MARLCAFLMVLAVLSYWPTCSLG. 2 cysteine pairs are disulfide-bonded: Cys24–Cys122 and Cys52–Cys162. A glycan (N-linked (GlcNAc...) asparagine) is linked at Asn101.

The protein belongs to the alpha/beta interferon family. In terms of assembly, interacts with CR2. In terms of processing, glycosylated.

It localises to the secreted. Its function is as follows. Produced by macrophages, IFN-alpha have antiviral activities. Interferon stimulates the production of two enzymes: a protein kinase and an oligoadenylate synthetase. The sequence is that of Interferon alpha-1 (Ifna1) from Mus musculus (Mouse).